The following is a 555-amino-acid chain: MADADGGSNLAVLDALDSARTQMYHMKAIVIAGMGFFTDAYDLFCISTVSKLLGRLYYQPDGSTDSKPGALSKTANNMVIGVALVGTLMGQLVFGYFGDKLGRKRVYGVTLILMAACAIGSGLSFGSSRKAVIGTLCFFRFWLGFGIGGDYPLSATIMSEYSNKKTRGAFIAAVFAMQGVGIIFAGLVSMIVSSIFLTYNKAPSYKGNHDLSRQMPAADYVWRIVLMIGAFPALATFYWRMKMPETARYTAIIDGNAKQAANDMQKVLSIEIEAEQEKLAKFNAANNYPLLSMEFARRHGLHLIGTTTTWFLLDIAFYSQNLTQKDIFPAMGLISGAAEVNALTEMFQISKASFLVALLGTFPGYWVTVALIDKMGRYMIQLIGFFMMSMFMLAMGILYDYLKTHHFLFGLLYALTFFFANFGPNSTTFVLPAELFPTRVRSTCHAISAAAGKAGAIVAAFGIQKLTYNSQVKSIKKALIILSITNMLGFFFTFLVPETMGRSLEEISGEDGNTGAGGGGAPAAANAGVGVSASDVSRDEKFPASSTEWQTSMHA.

Over Met1–Ala28 the chain is Cytoplasmic. The chain crosses the membrane as a helical span at residues Ile29–Val49. The Extracellular portion of the chain corresponds to Ser50–Asn77. The chain crosses the membrane as a helical span at residues Met78–Gly98. The Cytoplasmic segment spans residues Asp99 to Arg105. Residues Val106–Gly126 form a helical membrane-spanning segment. Topologically, residues Ser127–Lys130 are extracellular. Residues Ala131–Tyr151 form a helical membrane-spanning segment. Over Pro152–Arg167 the chain is Cytoplasmic. A helical transmembrane segment spans residues Gly168–Val188. Topologically, residues Ser189–Pro216 are extracellular. The helical transmembrane segment at Ala217 to Phe237 threads the bilayer. The Cytoplasmic portion of the chain corresponds to Tyr238–Arg298. The helical transmembrane segment at His299–Ser319 threads the bilayer. The Extracellular segment spans residues Gln320 to Lys351. A helical membrane pass occupies residues Ala352–Ile372. The Cytoplasmic segment spans residues Asp373 to Arg377. Residues Tyr378–Leu398 traverse the membrane as a helical segment. Over Tyr399–Leu408 the chain is Extracellular. Residues Phe409 to Phe436 traverse the membrane as a helical segment. Topologically, residues Pro437–Ser442 are cytoplasmic. A helical transmembrane segment spans residues Thr443–Ile463. The Extracellular segment spans residues Gln464 to Lys477. The chain crosses the membrane as a helical span at residues Ala478–Glu498. At Thr499–Ala555 the chain is on the cytoplasmic side. The segment at Glu506–Ala555 is disordered. Positions Gly512 to Ala521 are enriched in gly residues. The span at Pro522–Asp535 shows a compositional bias: low complexity. The segment covering Ala544–Ala555 has biased composition (polar residues).

This sequence belongs to the major facilitator superfamily. Phosphate:H(+) symporter (TC 2.A.1.9) family.

Its subcellular location is the membrane. Its function is as follows. Symbiosis-specific regulated inorganic phosphate (Pi) transporter. Probably involved in symbiosis-mediated Pi uptake in roots colonized by myccorhizal fungi. In Oryza sativa subsp. japonica (Rice), this protein is Inorganic phosphate transporter 1-11 (PHT1-11).